Reading from the N-terminus, the 110-residue chain is Protein P2 (110 aa).

Residues 72–82 (KLPTTSGSSSA) show a composition bias toward polar residues. The tract at residues 72-110 (KLPTTSGSSSAGAIVPAGSNTQGQYKAPPKKGIKRKYPA) is disordered. Residues 99 to 110 (PPKKGIKRKYPA) show a composition bias toward basic residues.

This chain is Protein P2, found in Oryza sativa (Rice).